We begin with the raw amino-acid sequence, 57 residues long: Potassium channel toxin alpha-KTx 26.3 (57 aa).

The signal sequence occupies residues 1–15; the sequence is MSGLSVFILIALVLS. The propeptide occupies 16–24; that stretch reads VIIDVLNNS. Cystine bridges form between Cys-30/Cys-48, Cys-34/Cys-53, and Cys-38/Cys-55.

This sequence belongs to the short scorpion toxin superfamily. Potassium channel inhibitor family. Alpha-KTx 26 subfamily. As to expression, expressed by the venom gland.

It is found in the secreted. In terms of biological role, recombinant toxin that reversibly inhibits the potassium current of mKv1.3/KCNA3 channel stably expressed in COS7 cells (IC(50)=150 nM). The chain is Potassium channel toxin alpha-KTx 26.3 from Mesobuthus gibbosus (Mediterranean checkered scorpion).